The sequence spans 86 residues: Gas vesicle protein A1 (86 aa).

Belongs to the gas vesicle GvpA family. The gas vesicle shell is 2 nm thick and consists of a single layer of this protein. It forms helical ribs nearly perpendicular to the long axis of the vesicle.

It is found in the gas vesicle shell. Its function is as follows. Gas vesicles are hollow, gas filled proteinaceous nanostructures found in some microorganisms. During planktonic growth they allow positioning of the organism at a favorable depth for light or nutrient acquisition. GvpA forms the protein shell. It is not clear if the 2 type A proteins in this organism are functionally redundant. Functionally, when the full gvp locus (gvpA1-gvpP-gvpQ-gvpA2-gvpR-gvpN-gvpF-gvpG-gvpL-gvpS-gvpK-gvpJ-gvpT-gvpU, called pNL26) is expressed in E.coli gas vesicles are made. The polypeptide is Gas vesicle protein A1 (Priestia megaterium (Bacillus megaterium)).